Reading from the N-terminus, the 367-residue chain is Putative F-box/kelch-repeat protein At4g39600 (367 aa).

The region spanning 11 to 57 (ATSNPSLPEDLVVSCLARVSRLYYPTLSLVSKSFRSLIASPDLYKTR) is the F-box domain. 2 Kelch repeats span residues 127–171 (HLYA…LDGK) and 172–216 (MYLA…EGKI).

This Arabidopsis thaliana (Mouse-ear cress) protein is Putative F-box/kelch-repeat protein At4g39600.